A 354-amino-acid chain; its full sequence is Methylthioribose-1-phosphate isomerase (354 aa).

Residues 54 to 56 (RGA), arginine 97, and glutamine 204 each bind substrate. The active-site Proton donor is the aspartate 245. 255 to 256 (NK) contacts substrate.

Belongs to the eIF-2B alpha/beta/delta subunits family. MtnA subfamily.

It carries out the reaction 5-(methylsulfanyl)-alpha-D-ribose 1-phosphate = 5-(methylsulfanyl)-D-ribulose 1-phosphate. Its pathway is amino-acid biosynthesis; L-methionine biosynthesis via salvage pathway; L-methionine from S-methyl-5-thio-alpha-D-ribose 1-phosphate: step 1/6. Catalyzes the interconversion of methylthioribose-1-phosphate (MTR-1-P) into methylthioribulose-1-phosphate (MTRu-1-P). The sequence is that of Methylthioribose-1-phosphate isomerase from Albidiferax ferrireducens (strain ATCC BAA-621 / DSM 15236 / T118) (Rhodoferax ferrireducens).